The primary structure comprises 642 residues: Phosphomethylpyrimidine synthase (642 aa).

Substrate-binding positions include N235, M264, Y293, H329, 349-351 (SRG), 390-393 (DGLR), and E429. Position 433 (H433) interacts with Zn(2+). Position 456 (Y456) interacts with substrate. H497 is a binding site for Zn(2+). [4Fe-4S] cluster contacts are provided by C577, C580, and C585.

It belongs to the ThiC family. In terms of assembly, homodimer. Requires [4Fe-4S] cluster as cofactor.

It carries out the reaction 5-amino-1-(5-phospho-beta-D-ribosyl)imidazole + S-adenosyl-L-methionine = 4-amino-2-methyl-5-(phosphooxymethyl)pyrimidine + CO + 5'-deoxyadenosine + formate + L-methionine + 3 H(+). Its pathway is cofactor biosynthesis; thiamine diphosphate biosynthesis. Its function is as follows. Catalyzes the synthesis of the hydroxymethylpyrimidine phosphate (HMP-P) moiety of thiamine from aminoimidazole ribotide (AIR) in a radical S-adenosyl-L-methionine (SAM)-dependent reaction. The polypeptide is Phosphomethylpyrimidine synthase (Alteromonas mediterranea (strain DSM 17117 / CIP 110805 / LMG 28347 / Deep ecotype)).